A 194-amino-acid chain; its full sequence is MYLDQIKAELVEAQDLLNKFISDENNIKLIQEAALLISNSFKQGGKVLSCGNGGSHCDAMHFAEELTGRYRENRPGYPAIAISDASHLSCVSNDFGYEYVFSRYVEAVGQKGDVLFGLSTSGNSKNILNAIEAAKTKGMKVIAMTGKDGGKMAGLADVEIRIPHFRYADRIQEIHIKVIHILMMLIEFEMAKQA.

In terms of domain architecture, SIS spans 37 to 194 (ISNSFKQGGK…LIEFEMAKQA (158 aa)). Position 52 to 54 (52 to 54 (NGG)) interacts with substrate. 2 residues coordinate Zn(2+): His-61 and Glu-65. Residues Glu-65, 93 to 94 (ND), 119 to 121 (STS), Ser-124, and Gln-172 each bind substrate. Zn(2+) is bound by residues Gln-172 and His-180.

This sequence belongs to the SIS family. GmhA subfamily. As to quaternary structure, homotetramer. The cofactor is Zn(2+).

It localises to the cytoplasm. The catalysed reaction is 2 D-sedoheptulose 7-phosphate = D-glycero-alpha-D-manno-heptose 7-phosphate + D-glycero-beta-D-manno-heptose 7-phosphate. It participates in carbohydrate biosynthesis; D-glycero-D-manno-heptose 7-phosphate biosynthesis; D-glycero-alpha-D-manno-heptose 7-phosphate and D-glycero-beta-D-manno-heptose 7-phosphate from sedoheptulose 7-phosphate: step 1/1. In terms of biological role, catalyzes the isomerization of sedoheptulose 7-phosphate in D-glycero-D-manno-heptose 7-phosphate. The chain is Phosphoheptose isomerase from Haemophilus influenzae (strain PittEE).